Here is a 195-residue protein sequence, read N- to C-terminus: Peptidyl-tRNA hydrolase (195 aa).

Y17 contributes to the tRNA binding site. H22 functions as the Proton acceptor in the catalytic mechanism. TRNA is bound by residues F68, N70, and N116.

Belongs to the PTH family. As to quaternary structure, monomer.

The protein resides in the cytoplasm. It carries out the reaction an N-acyl-L-alpha-aminoacyl-tRNA + H2O = an N-acyl-L-amino acid + a tRNA + H(+). Its function is as follows. Hydrolyzes ribosome-free peptidyl-tRNAs (with 1 or more amino acids incorporated), which drop off the ribosome during protein synthesis, or as a result of ribosome stalling. In terms of biological role, catalyzes the release of premature peptidyl moieties from peptidyl-tRNA molecules trapped in stalled 50S ribosomal subunits, and thus maintains levels of free tRNAs and 50S ribosomes. The chain is Peptidyl-tRNA hydrolase from Shewanella denitrificans (strain OS217 / ATCC BAA-1090 / DSM 15013).